We begin with the raw amino-acid sequence, 387 residues long: 1-deoxy-D-xylulose 5-phosphate reductoisomerase (387 aa).

NADPH is bound by residues Thr11, Gly12, Ser13, Ile14, Gly37, Arg39, and Asn123. Lys124 serves as a coordination point for 1-deoxy-D-xylulose 5-phosphate. Position 125 (Glu125) interacts with NADPH. Asp147 contacts Mn(2+). 1-deoxy-D-xylulose 5-phosphate-binding residues include Ser148, Glu149, Ser173, and His196. Glu149 serves as a coordination point for Mn(2+). Residue Gly202 coordinates NADPH. The 1-deoxy-D-xylulose 5-phosphate site is built by Ser209, Asn214, Lys215, and Glu218. Glu218 contributes to the Mn(2+) binding site.

Belongs to the DXR family. Mg(2+) is required as a cofactor. Mn(2+) serves as cofactor.

It catalyses the reaction 2-C-methyl-D-erythritol 4-phosphate + NADP(+) = 1-deoxy-D-xylulose 5-phosphate + NADPH + H(+). It participates in isoprenoid biosynthesis; isopentenyl diphosphate biosynthesis via DXP pathway; isopentenyl diphosphate from 1-deoxy-D-xylulose 5-phosphate: step 1/6. Catalyzes the NADPH-dependent rearrangement and reduction of 1-deoxy-D-xylulose-5-phosphate (DXP) to 2-C-methyl-D-erythritol 4-phosphate (MEP). The polypeptide is 1-deoxy-D-xylulose 5-phosphate reductoisomerase (Corynebacterium diphtheriae (strain ATCC 700971 / NCTC 13129 / Biotype gravis)).